Reading from the N-terminus, the 231-residue chain is 2-C-methyl-D-erythritol 4-phosphate cytidylyltransferase (231 aa).

The protein belongs to the IspD/TarI cytidylyltransferase family. IspD subfamily.

It catalyses the reaction 2-C-methyl-D-erythritol 4-phosphate + CTP + H(+) = 4-CDP-2-C-methyl-D-erythritol + diphosphate. It functions in the pathway isoprenoid biosynthesis; isopentenyl diphosphate biosynthesis via DXP pathway; isopentenyl diphosphate from 1-deoxy-D-xylulose 5-phosphate: step 2/6. Catalyzes the formation of 4-diphosphocytidyl-2-C-methyl-D-erythritol from CTP and 2-C-methyl-D-erythritol 4-phosphate (MEP). This Bacillus licheniformis (strain ATCC 14580 / DSM 13 / JCM 2505 / CCUG 7422 / NBRC 12200 / NCIMB 9375 / NCTC 10341 / NRRL NRS-1264 / Gibson 46) protein is 2-C-methyl-D-erythritol 4-phosphate cytidylyltransferase.